Here is a 62-residue protein sequence, read N- to C-terminus: Beta-defensin 133 (62 aa).

Residues 1-21 (MKIHIFLFVLFFFLVPIATRG) form the signal peptide. 2 disulfides stabilise this stretch: C32–C60 and C39–C53.

This sequence belongs to the beta-defensin family.

It localises to the secreted. In terms of biological role, has antibacterial activity. The protein is Beta-defensin 133 (DEFB133) of Pan troglodytes (Chimpanzee).